A 437-amino-acid polypeptide reads, in one-letter code: 23S rRNA (uracil(1939)-C(5))-methyltransferase RlmD (437 aa).

A TRAM domain is found at 10 to 68 (SAPRNTTFVAEILDLDYQGRGVAKVQGKTWFIENALPQEKVEVRIVDEKRHYGHGISCK). [4Fe-4S] cluster-binding residues include C81, C87, C90, and C167. Residues Q270, F299, N304, E320, N347, and D368 each coordinate S-adenosyl-L-methionine. C394 serves as the catalytic Nucleophile.

Belongs to the class I-like SAM-binding methyltransferase superfamily. RNA M5U methyltransferase family. RlmD subfamily.

It carries out the reaction uridine(1939) in 23S rRNA + S-adenosyl-L-methionine = 5-methyluridine(1939) in 23S rRNA + S-adenosyl-L-homocysteine + H(+). In terms of biological role, catalyzes the formation of 5-methyl-uridine at position 1939 (m5U1939) in 23S rRNA. The polypeptide is 23S rRNA (uracil(1939)-C(5))-methyltransferase RlmD (Pasteurella multocida (strain Pm70)).